A 136-amino-acid chain; its full sequence is NADPH-dependent 7-cyano-7-deazaguanine reductase (136 aa).

The active-site Thioimide intermediate is Cys50. Asp57 functions as the Proton donor in the catalytic mechanism. Substrate contacts are provided by residues 72–74 (YEL) and 91–92 (HE).

The protein belongs to the GTP cyclohydrolase I family. QueF type 1 subfamily.

Its subcellular location is the cytoplasm. The enzyme catalyses 7-aminomethyl-7-carbaguanine + 2 NADP(+) = 7-cyano-7-deazaguanine + 2 NADPH + 3 H(+). It functions in the pathway tRNA modification; tRNA-queuosine biosynthesis. In terms of biological role, catalyzes the NADPH-dependent reduction of 7-cyano-7-deazaguanine (preQ0) to 7-aminomethyl-7-deazaguanine (preQ1). The polypeptide is NADPH-dependent 7-cyano-7-deazaguanine reductase (Prochlorococcus marinus (strain AS9601)).